The sequence spans 542 residues: Aspartate kinase FUB3 (542 aa).

ACT domains lie at 404–472 (ILSN…VLPD) and 478–542 (LVGA…KSAI).

This sequence belongs to the aspartokinase family.

It carries out the reaction L-aspartate + ATP = 4-phospho-L-aspartate + ADP. It functions in the pathway mycotoxin biosynthesis. In terms of biological role, aspartate kinase; part of the gene cluster that mediates the biosynthesis of fusaric acid, a mycotoxin with low to moderate toxicity to animals and humans, but with high phytotoxic properties. L-aspartate is suggested as fusaric acid amino acid precursor that is activated and further processed to O-acetyl-L-homoserine by cluster enzymes aspartate kinase FUB3 and homoserine O-acetyltransferase FUB5, as well as enzymes of the primary metabolism. The polyketide synthase (PKS) FUB1 generates the triketide trans-2-hexenal which is presumptively released by the hydrolase FUB4 and linked to the NRPS-bound amino acid precursor by NAD(P)-dependent dehydrogenase FUB6. FUB1, FUB4, and the non-canonical NRPS Fub8 may form an enzyme complex. Further processing of the NRPS-bound intermediate might be carried out by FUB6 and the sulfhydrylase FUB7, enabling a spontaneous electrocyclization to close the carbon backbone of fusaric acid. Dihydrofusaric acid is likely to be released via reduction by the thioester reductase (TR) domain of FUB8 whereupon the final oxidation to fusaric acid may (also) be performed by the FMN-dependent dehydrogenase FUB9. The sequence is that of Aspartate kinase FUB3 from Fusarium oxysporum f. sp. lycopersici (strain 4287 / CBS 123668 / FGSC 9935 / NRRL 34936) (Fusarium vascular wilt of tomato).